Consider the following 172-residue polypeptide: Achaete-scute homolog 4 (172 aa).

Residues 72 to 124 enclose the bHLH domain; sequence AFLRKRNERERQRVRCVNEGYARLRDHLPRELADKRLSKVETLRAAIDYIKHL. The disordered stretch occupies residues 144-172; the sequence is QRRAECNSDGESKASSAPSPSSEPEEGGS. The span at 145–155 shows a compositional bias: basic and acidic residues; sequence RRAECNSDGES. Low complexity predominate over residues 156–165; sequence KASSAPSPSS.

Expressed in skin. 7-fold higher expression in fetal skin than in adult skin. Weak expression also detected in fetal lung, aorta and brain, and in adult stomach, kidney, ovary and breast.

It is found in the nucleus. Functionally, could be a transcriptional regulator involved in skin development. In Homo sapiens (Human), this protein is Achaete-scute homolog 4 (ASCL4).